The following is a 60-amino-acid chain: Putative transmembrane protein 74 (60 aa).

The next 2 helical transmembrane spans lie at 4-24 (FSVI…FLTF) and 35-55 (WVYI…YQAG).

The protein localises to the host membrane. This chain is Putative transmembrane protein 74 (SIFV0074), found in Sulfolobus islandicus filamentous virus (isolate Iceland/Hveragerdi) (SIFV).